We begin with the raw amino-acid sequence, 792 residues long: DNA ligase (792 aa).

Residues D42–D46, S91–L92, and E124 contribute to the NAD(+) site. Catalysis depends on K126, which acts as the N6-AMP-lysine intermediate. Residues R147, E189, K306, and K330 each contribute to the NAD(+) site. 4 residues coordinate Zn(2+): C424, C426, C448, and C454. The region spanning K714–G792 is the BRCT domain.

It belongs to the NAD-dependent DNA ligase family. LigA subfamily. Mg(2+) is required as a cofactor. Requires Mn(2+) as cofactor.

It carries out the reaction NAD(+) + (deoxyribonucleotide)n-3'-hydroxyl + 5'-phospho-(deoxyribonucleotide)m = (deoxyribonucleotide)n+m + AMP + beta-nicotinamide D-nucleotide.. In terms of biological role, DNA ligase that catalyzes the formation of phosphodiester linkages between 5'-phosphoryl and 3'-hydroxyl groups in double-stranded DNA using NAD as a coenzyme and as the energy source for the reaction. It is essential for DNA replication and repair of damaged DNA. The protein is DNA ligase of Caulobacter sp. (strain K31).